A 2193-amino-acid chain; its full sequence is Protein sidekick-1 (2193 aa).

A compositionally biased stretch (low complexity) spans 1–23 (MARARPSVAGGGVAAPPERAGPG). Residues 1–56 (MARARPSVAGGGVAAPPERAGPGRPRRSRTGHHCDPECPGLRAAPRTPGPGAGRRA) form a disordered region. 5 consecutive Ig-like C2-type domains span residues 86 to 168 (PYFK…SEIQ), 173 to 259 (GNFM…SPFI), 275 to 363 (PIIV…AFLS), 368 to 458 (PYFT…LDVT), and 462 to 551 (PAFT…AMLT). A disulfide bond links Cys108 and Cys151. Asn123, Asn253, and Asn283 each carry an N-linked (GlcNAc...) asparagine glycan. Cystine bridges form between Cys297/Cys344, Cys390/Cys440, and Cys483/Cys535. N-linked (GlcNAc...) asparagine glycans are attached at residues Asn532, Asn545, and Asn554. The Ig-like C2-type 6 domain maps to 556-645 (TSIVHPPEDR…GSDSRTARLE (90 aa)). Cysteines 577 and 629 form a disulfide. 13 Fibronectin type-III domains span residues 652 to 748 (PPQN…LPEE), 753 to 849 (PPKN…TLQG), 854 to 952 (PPQN…THED), 956 to 1050 (AVGH…VPPD), 1054 to 1153 (APSN…TLQA), 1158 to 1256 (APTS…TRES), 1261 to 1358 (APEN…TKDD), 1362 to 1456 (PPVR…TEKR), 1461 to 1558 (PPRE…TLQD), 1563 to 1681 (PPGS…VGEA), 1686 to 1782 (APQN…THQA), 1786 to 1881 (PPSF…AGPA), and 1884 to 1982 (SPGS…SAQA). 5 N-linked (GlcNAc...) asparagine glycosylation sites follow: Asn764, Asn803, Asn864, Asn997, and Asn1006. N-linked (GlcNAc...) asparagine glycans are attached at residues Asn1264 and Asn1315. 4 N-linked (GlcNAc...) asparagine glycosylation sites follow: Asn1636, Asn1730, Asn1801, and Asn1875. A helical membrane pass occupies residues 1992 to 2012 (FLLVMALSSLLLILLVVFVLV). Over 2013-2193 (LHGQSKKYKS…APLTGFSSFV (181 aa)) the chain is Cytoplasmic. Residues 2057 to 2080 (STFSKKNGTRSPPRPSPGGLHYSD) form a disordered region. Residues 2187-2193 (TGFSSFV) carry the PDZ-binding motif.

The protein belongs to the sidekick family. Homodimer; mediates homophilic interactions to promote cell adhesion. Interacts (via PDZ-binding motif) with MAGI1, MAGI2, DLG2, DLG3 and DLG4. As to quaternary structure, does not mediate homophilic interactions. In terms of tissue distribution, expressed by non-overlapping subsets of retinal neurons. Sdk1 and Sdk2 are expressed in non-overlapping subsets of interneurons and retinal ganglion cells (RGCs) that form synapses in distinct inner plexiform layer (IPL) sublaminae (at protein level).

It localises to the cell membrane. Its subcellular location is the synapse. Its function is as follows. Adhesion molecule that promotes lamina-specific synaptic connections in the retina. Expressed in specific subsets of interneurons and retinal ganglion cells (RGCs) and promotes synaptic connectivity via homophilic interactions. The sequence is that of Protein sidekick-1 from Mus musculus (Mouse).